The chain runs to 662 residues: Eukaryotic peptide chain release factor GTP-binding subunit (662 aa).

The several sort of repeats stretch occupies residues 9 to 102 (QQGGQQNAGG…NQFQPQQQSQ (94 aa)). 2 stretches are compositionally biased toward low complexity: residues 73–102 (AYNG…QQSQ) and 128–137 (KLVSSSGIKL). The disordered stretch occupies residues 73 to 193 (AYNGYPYQAQ…AKDEKKEDLP (121 aa)). Residues 103–230 (GMTLDDFHKQ…EEVDEGVVND (128 aa)) form a charged region. Residues 143-193 (KPKEDEKKEEEPKKEEKKAEPKEQESKKEEPKREGTPRPAAAKDEKKEDLP) are compositionally biased toward basic and acidic residues. The tr-type G domain maps to 235–461 (KDHMSIIFMG…YMDNMSHVDR (227 aa)). The segment at 244–251 (GHVDAGKS) is G1. Residue 244–251 (GHVDAGKS) coordinates GTP. Residues 300 to 304 (GKTIE) form a G2 region. At Thr318 the chain carries Phosphothreonine. The tract at residues 321 to 324 (DAPG) is G3. GTP contacts are provided by residues 321–325 (DAPGH) and 383–386 (NKMD). The G4 stretch occupies residues 383–386 (NKMD). Residues 425 to 427 (SGY) are G5.

This sequence belongs to the TRAFAC class translation factor GTPase superfamily. Classic translation factor GTPase family. ERF3 subfamily.

It is found in the cytoplasm. Involved in translation termination. Stimulates the activity of ERF1. Binds guanine nucleotides. This Zygosaccharomyces rouxii protein is Eukaryotic peptide chain release factor GTP-binding subunit (SUP35).